The chain runs to 842 residues: Elongation factor 2 (842 aa).

Positions 17–253 constitute a tr-type G domain; the sequence is TNVRNMSVIA…LWGDSYFNPK (237 aa). GTP is bound by residues 26-33, 158-161, and 213-215; these read AHVDHGKS, NKVD, and SGL. H699 bears the Diphthamide mark.

The protein belongs to the TRAFAC class translation factor GTPase superfamily. Classic translation factor GTPase family. EF-G/EF-2 subfamily.

It localises to the cytoplasm. It catalyses the reaction GTP + H2O = GDP + phosphate + H(+). Its function is as follows. Catalyzes the GTP-dependent ribosomal translocation step during translation elongation. During this step, the ribosome changes from the pre-translocational (PRE) to the post-translocational (POST) state as the newly formed A-site-bound peptidyl-tRNA and P-site-bound deacylated tRNA move to the P and E sites, respectively. Catalyzes the coordinated movement of the two tRNA molecules, the mRNA and conformational changes in the ribosome. This is Elongation factor 2 (EFT1) from Naumovozyma castellii (Yeast).